Consider the following 348-residue polypeptide: GMP reductase 2 (348 aa).

NADP(+)-binding positions include 26 to 27 (SR), Lys78, 129 to 131 (DVA), and 180 to 181 (IG). The K(+) site is built by Gly181, Gly183, and Cys186. Catalysis depends on Cys186, which acts as the Thioimidate intermediate. Residue Thr188 is the Proton donor/acceptor of the active site. Arg189 provides a ligand contact to K(+). Residues 219–221 (DGG), 242–243 (GG), 268–270 (GMS), and 286–290 (RASEG) contribute to the GMP site. Residues Met269 and 285-286 (YR) contribute to the NADP(+) site. Lys291 carries the post-translational modification N6-acetyllysine. 314 to 317 (STCT) lines the NADP(+) pocket.

The protein belongs to the IMPDH/GMPR family. GuaC type 1 subfamily. Homotetramer.

It carries out the reaction IMP + NH4(+) + NADP(+) = GMP + NADPH + 2 H(+). Catalyzes the irreversible NADPH-dependent deamination of GMP to IMP. It functions in the conversion of nucleobase, nucleoside and nucleotide derivatives of G to A nucleotides, and in maintaining the intracellular balance of A and G nucleotides. Plays a role in modulating cellular differentiation. The chain is GMP reductase 2 from Mus musculus (Mouse).